We begin with the raw amino-acid sequence, 451 residues long: Trigger factor (451 aa).

One can recognise a PPIase FKBP-type domain in the interval 165 to 250; it reads DDKLTIDFEG…LHQIQAREAL (86 aa).

This sequence belongs to the FKBP-type PPIase family. Tig subfamily.

The protein localises to the cytoplasm. The enzyme catalyses [protein]-peptidylproline (omega=180) = [protein]-peptidylproline (omega=0). Functionally, involved in protein export. Acts as a chaperone by maintaining the newly synthesized protein in an open conformation. Functions as a peptidyl-prolyl cis-trans isomerase. The polypeptide is Trigger factor (Helicobacter pylori (strain HPAG1)).